We begin with the raw amino-acid sequence, 253 residues long: 5'-nucleotidase SurE (253 aa).

A divalent metal cation contacts are provided by Asp8, Asp9, Ser39, and Asn91.

This sequence belongs to the SurE nucleotidase family. The cofactor is a divalent metal cation.

Its subcellular location is the cytoplasm. The enzyme catalyses a ribonucleoside 5'-phosphate + H2O = a ribonucleoside + phosphate. Nucleotidase that shows phosphatase activity on nucleoside 5'-monophosphates. In Leptothrix cholodnii (strain ATCC 51168 / LMG 8142 / SP-6) (Leptothrix discophora (strain SP-6)), this protein is 5'-nucleotidase SurE.